A 256-amino-acid chain; its full sequence is Pimeloyl-[acyl-carrier protein] methyl ester esterase (256 aa).

Residues 15 to 242 (HLVLLHGWGL…AAHAPFISHP (228 aa)) form the AB hydrolase-1 domain. Residues Trp22, 82–83 (SL), and 143–147 (FLALQ) contribute to the substrate site. Ser82 functions as the Nucleophile in the catalytic mechanism. Active-site residues include Asp207 and His235. Substrate is bound at residue His235.

Belongs to the AB hydrolase superfamily. Carboxylesterase BioH family. Monomer.

The protein resides in the cytoplasm. The catalysed reaction is 6-carboxyhexanoyl-[ACP] methyl ester + H2O = 6-carboxyhexanoyl-[ACP] + methanol + H(+). It participates in cofactor biosynthesis; biotin biosynthesis. The physiological role of BioH is to remove the methyl group introduced by BioC when the pimeloyl moiety is complete. It allows to synthesize pimeloyl-ACP via the fatty acid synthetic pathway through the hydrolysis of the ester bonds of pimeloyl-ACP esters. In Escherichia coli O6:H1 (strain CFT073 / ATCC 700928 / UPEC), this protein is Pimeloyl-[acyl-carrier protein] methyl ester esterase.